We begin with the raw amino-acid sequence, 328 residues long: Probable voltage-gated potassium channel subunit beta (328 aa).

Residues Trp21, Gln27, and Asp49 each contribute to the NADP(+) site. The active-site Proton donor/acceptor is the Tyr54. NADP(+) contacts are provided by Ser152, Gln178, Trp207, Ser208, Pro209, Leu210, Ala211, Lys218, Arg229, Gly285, Thr287, Gln291, Glu294, and Asn295.

The protein belongs to the shaker potassium channel beta subunit family. In terms of assembly, forms heteromultimeric complexes with potassium channel alpha subunits. As to expression, expressed in roots, leaves and flowers (at protein level).

In terms of biological role, probable accessory potassium channel protein which modulates the activity of the pore-forming alpha subunit. The chain is Probable voltage-gated potassium channel subunit beta (KAB1) from Arabidopsis thaliana (Mouse-ear cress).